Here is a 150-residue protein sequence, read N- to C-terminus: Deoxyuridine 5'-triphosphate nucleotidohydrolase (150 aa).

Residues 69-71 (RSG), N82, 86-88 (TID), and K96 each bind substrate.

This sequence belongs to the dUTPase family. Mg(2+) is required as a cofactor.

The enzyme catalyses dUTP + H2O = dUMP + diphosphate + H(+). The protein operates within pyrimidine metabolism; dUMP biosynthesis; dUMP from dCTP (dUTP route): step 2/2. Functionally, this enzyme is involved in nucleotide metabolism: it produces dUMP, the immediate precursor of thymidine nucleotides and it decreases the intracellular concentration of dUTP so that uracil cannot be incorporated into DNA. In Aquifex aeolicus (strain VF5), this protein is Deoxyuridine 5'-triphosphate nucleotidohydrolase.